Reading from the N-terminus, the 226-residue chain is Urease accessory protein UreF (226 aa).

This sequence belongs to the UreF family. In terms of assembly, ureD, UreF and UreG form a complex that acts as a GTP-hydrolysis-dependent molecular chaperone, activating the urease apoprotein by helping to assemble the nickel containing metallocenter of UreC. The UreE protein probably delivers the nickel.

The protein localises to the cytoplasm. Functionally, required for maturation of urease via the functional incorporation of the urease nickel metallocenter. The protein is Urease accessory protein UreF of Burkholderia mallei (strain NCTC 10247).